A 1839-amino-acid chain; its full sequence is DNA-directed RNA polymerase II subunit RPB1 (1839 aa).

Residues cysteine 66, cysteine 69, cysteine 76, histidine 79, cysteine 106, cysteine 109, and cysteine 147 each contribute to the Zn(2+) site. Residues 152–174 (DIDDVQSHSTDEPVKKSRGGCGA) form a disordered region. Positions 156-166 (VQSHSTDEPVK) are enriched in basic and acidic residues. Cysteine 172 lines the Zn(2+) pocket. Residues 326–397 (TQKSGRPIKS…PETVTPYNIE (72 aa)) mediate DNA binding. Mg(2+) is bound by residues aspartate 495, aspartate 497, and aspartate 499. Positions 785–795 (GQQNVEGKRIP) are alpha-amanitin binding. The tract at residues 829 to 841 (PQEFFFHAMGGRE) is bridging helix. Residues 1538–1726 (PSSSPGYSPS…PSYGPTSPSY (189 aa)) are compositionally biased toward low complexity. The interval 1538–1839 (PSSSPGYSPS…DASKDDKGNP (302 aa)) is disordered. 27 tandem repeats follow at residues 1544–1550 (YSPSSPG), 1551–1557 (YSPTSPG), 1558–1564 (YSPTSPG), 1565–1571 (YSPTSPG), 1572–1578 (YSPTSPT), 1579–1585 (YSPSSPG), 1586–1592 (YSPTSPA), 1593–1599 (YSPTSPS), 1600–1606 (YSPTSPS), 1607–1613 (YSPTSPS), 1614–1620 (YSPTSPS), 1621–1627 (YSPTSPS), 1628–1634 (YSPTSPS), 1635–1641 (YSPTSPA), 1642–1648 (YSPTSPA), 1649–1655 (YSPTSPA), 1656–1662 (YSPTSPS), 1663–1669 (YSPTSPS), 1670–1676 (YSPTSPS), 1677–1683 (YSPTSPS), 1684–1690 (YSPTSPS), 1691–1697 (YSPTSPA), 1698–1704 (YSPTSPG), 1705–1711 (YSPTSPS), 1712–1718 (YSPTSPS), 1719–1725 (YGPTSPS), and 1726–1732 (YNPQSAK). The segment at 1544–1813 (YSPSSPGYSP…LPGYSPSSTG (270 aa)) is C-terminal domain (CTD); 37 X 7 AA tandem approximate repeats of Y-[GNS]-P-[QST]-[LNS]-[APT]-[AGKNRSTY]. Residues 1727–1745 (NPQSAKYSPSIAYSPSNAR) show a composition bias toward polar residues. The stretch at 1733-1738 (YSPSIA) is one 28; approximate repeat. 6 tandem repeats follow at residues 1739–1745 (YSPSNAR), 1752–1758 (YSPTSPN), 1759–1765 (YSPTSPS), 1766–1772 (YSPTSPS), 1773–1779 (YSPSSPT), and 1780–1786 (YSPSSPY). Over residues 1747–1798 (SPASPYSPTSPNYSPTSPSYSPTSPSYSPSSPTYSPSSPYSSGASPDYSPSA) the composition is skewed to low complexity. The stretch at 1794–1799 (YSPSAG) is one 35; approximate repeat. Repeat copies occupy residues 1800 to 1806 (YSPTLPG) and 1807 to 1813 (YSPSSTG). Over residues 1818–1839 (HEGDKKDKTGKKDASKDDKGNP) the composition is skewed to basic and acidic residues.

Belongs to the RNA polymerase beta' chain family. As to quaternary structure, component of the RNA polymerase II (Pol II) complex consisting of at least 12 subunits. Interacts with RDM1. Interacts (via CTD) with PRP40A, PRP40B, PRP40C and CYP59. Interacts with MEE12/CCG1 and MEE14/CBP1. Binds (via CTD) to ATX1, especially when phosphorylated on 'Ser-5' of the heptapeptide repeat. Post-translationally, the tandem 7 residues repeats in the C-terminal domain (CTD) can be highly phosphorylated. The phosphorylation activates Pol II. Phosphorylation occurs mainly at residues 'Ser-2' and 'Ser-5' of the heptapeptide repeat. The phosphorylation state is believed to result from the balanced action of site-specific CTD kinases and phosphatase, and a 'CTD code' that specifies the position of Pol II within the transcription cycle has been proposed. ATX1 seems to regulate phosphorylation statment. 'Ser-2' and 'Ser-5' phosphorylation are repressed by flavopiridol (Flap) and seliciclib (Selic), inhibitors of CDK7 and CDK9.

It is found in the nucleus. It carries out the reaction RNA(n) + a ribonucleoside 5'-triphosphate = RNA(n+1) + diphosphate. DNA-dependent RNA polymerase catalyzes the transcription of DNA into RNA using the four ribonucleoside triphosphates as substrates. Largest and catalytic component of RNA polymerase II which synthesizes mRNA precursors and many functional non-coding RNAs. Forms the polymerase active center together with the second largest subunit. Pol II is the central component of the basal RNA polymerase II transcription machinery. It is composed of mobile elements that move relative to each other. NRPB1 is part of the core element with the central large cleft, the clamp element that moves to open and close the cleft and the jaws that are thought to grab the incoming DNA template. At the start of transcription, a single-stranded DNA template strand of the promoter is positioned within the central active site cleft of Pol II. A bridging helix emanates from NRPB1 and crosses the cleft near the catalytic site and is thought to promote translocation of Pol II by acting as a ratchet that moves the RNA-DNA hybrid through the active site by switching from straight to bent conformations at each step of nucleotide addition. During transcription elongation, Pol II moves on the template as the transcript elongates. Elongation is influenced by the phosphorylation status of the C-terminal domain (CTD) of Pol II largest subunit (NRPB1), which serves as a platform for assembly of factors that regulate transcription initiation, elongation, termination and mRNA processing. The polypeptide is DNA-directed RNA polymerase II subunit RPB1 (Arabidopsis thaliana (Mouse-ear cress)).